Consider the following 173-residue polypeptide: MDIAIQHPWFKRTLGPFYPSRLFDQFFGEGLFEYDLLPFLSSTISPYYRQSLFRTVLDSGISEVRSDRDKFVIFLDVKHFSPEDLTVKVQEDFVEIHGKHNERQDDHGYISREFHRRYRLPSNVDQTALSCSLSADGMLTFSGPKVPSGLDAGHSERAIPVSREEKPSSAPSS.

N-acetylmethionine is present on methionine 1. The tract at residues 1–63 (MDIAIQHPWF…RTVLDSGISE (63 aa)) is required for complex formation with BFSP1 and BFSP2. Glutamine 6 is modified (deamidated glutamine; partial). Serine 45 carries the post-translational modification Phosphoserine. Residue glutamine 50 is modified to Deamidated glutamine; partial. In terms of domain architecture, sHSP spans 52 to 162 (LFRTVLDSGI…GHSERAIPVS (111 aa)). The residue at position 70 (lysine 70) is an N6-acetyllysine. Glutamine 90 is subject to Deamidated glutamine; partial. N6-acetyllysine is present on lysine 99. Histidine 100 lines the Zn(2+) pocket. The residue at position 101 (asparagine 101) is a Deamidated asparagine; partial. Residues glutamate 102 and histidine 107 each coordinate Zn(2+). The residue at position 122 (serine 122) is a Phosphoserine. Deamidated asparagine; partial is present on asparagine 123. The disordered stretch occupies residues 144-173 (PKVPSGLDAGHSERAIPVSREEKPSSAPSS). Over residues 153–167 (GHSERAIPVSREEKP) the composition is skewed to basic and acidic residues. A Zn(2+)-binding site is contributed by histidine 154. The O-linked (GlcNAc) serine glycan is linked to serine 162.

It belongs to the small heat shock protein (HSP20) family. Heteromer composed of three CRYAA and one CRYAB subunits. Inter-subunit bridging via zinc ions enhances stability, which is crucial as there is no protein turn over in the lens. Can also form homodimers and homotetramers (dimers of dimers) which serve as the building blocks of homooligomers. Within homooligomers, the zinc-binding motif is created from residues of 3 different molecules. His-100 and Glu-102 from one molecule are ligands of the zinc ion, and His-107 and His-154 residues from additional molecules complete the site with tetrahedral coordination geometry. Part of a complex required for lens intermediate filament formation composed of BFSP1, BFSP2 and CRYAA. In terms of processing, acetylation at Lys-70 may increase chaperone activity. Post-translationally, undergoes age-dependent proteolytical cleavage at the C-terminus.

It is found in the cytoplasm. The protein resides in the nucleus. In terms of biological role, contributes to the transparency and refractive index of the lens. Acts as a chaperone, preventing aggregation of various proteins under a wide range of stress conditions. Required for the correct formation of lens intermediate filaments as part of a complex composed of BFSP1, BFSP2 and CRYAA. This is Alpha-crystallin A chain (CRYAA) from Tapirus indicus (Asiatic tapir).